The sequence spans 554 residues: Formate--tetrahydrofolate ligase (554 aa).

64–71 (TPAGEGKS) is a binding site for ATP.

It belongs to the formate--tetrahydrofolate ligase family.

It catalyses the reaction (6S)-5,6,7,8-tetrahydrofolate + formate + ATP = (6R)-10-formyltetrahydrofolate + ADP + phosphate. It functions in the pathway one-carbon metabolism; tetrahydrofolate interconversion. In Leuconostoc citreum (strain KM20), this protein is Formate--tetrahydrofolate ligase.